Consider the following 91-residue polypeptide: Cell division topological specificity factor (91 aa).

This sequence belongs to the MinE family.

Its function is as follows. Prevents the cell division inhibition by proteins MinC and MinD at internal division sites while permitting inhibition at polar sites. This ensures cell division at the proper site by restricting the formation of a division septum at the midpoint of the long axis of the cell. The protein is Cell division topological specificity factor of Chloroflexus aggregans (strain MD-66 / DSM 9485).